The sequence spans 99 residues: MMMDKQVEEVKKHYPIVEDWSVIVARKEDDCMTVTDAVPFILAGYKNVSYEMDDIVVLCSEPIGLTWEDVRFLKNHEGSVSFEEIGYEDKAMVYHVDLG.

The protein is Putative gene 45 protein (45) of Bacillus phage SP01 (Bacteriophage SP01).